The chain runs to 327 residues: Ribosomal RNA small subunit methyltransferase H (327 aa).

S-adenosyl-L-methionine-binding positions include 36-38 (GGH), Asp61, Phe88, Asp114, and Gln121.

Belongs to the methyltransferase superfamily. RsmH family.

The protein resides in the cytoplasm. The enzyme catalyses cytidine(1402) in 16S rRNA + S-adenosyl-L-methionine = N(4)-methylcytidine(1402) in 16S rRNA + S-adenosyl-L-homocysteine + H(+). Functionally, specifically methylates the N4 position of cytidine in position 1402 (C1402) of 16S rRNA. This Chlorobium phaeovibrioides (strain DSM 265 / 1930) (Prosthecochloris vibrioformis (strain DSM 265)) protein is Ribosomal RNA small subunit methyltransferase H.